The primary structure comprises 1233 residues: ATP-dependent helicase/nuclease subunit A (1233 aa).

In terms of domain architecture, UvrD-like helicase ATP-binding spans 3 to 474; sequence TKWTEEQKQA…ILLYKNFRSR (472 aa). Position 24 to 31 (24 to 31) interacts with ATP; it reads AAAGSGKT. The UvrD-like helicase C-terminal domain occupies 518-809; sequence VTGGAVELHL…RIMSIHKSKG (292 aa). Positions 533 to 555 are disordered; that stretch reads VEEEVEEKEEEKNEEKDFEEEEE.

The protein belongs to the helicase family. AddA subfamily. As to quaternary structure, heterodimer of AddA and AddB/RexB. Mg(2+) serves as cofactor.

The enzyme catalyses Couples ATP hydrolysis with the unwinding of duplex DNA by translocating in the 3'-5' direction.. It carries out the reaction ATP + H2O = ADP + phosphate + H(+). The heterodimer acts as both an ATP-dependent DNA helicase and an ATP-dependent, dual-direction single-stranded exonuclease. Recognizes the chi site generating a DNA molecule suitable for the initiation of homologous recombination. The AddA nuclease domain is required for chi fragment generation; this subunit has the helicase and 3' -&gt; 5' nuclease activities. This Thermoanaerobacter pseudethanolicus (strain ATCC 33223 / 39E) (Clostridium thermohydrosulfuricum) protein is ATP-dependent helicase/nuclease subunit A.